The primary structure comprises 103 residues: Small ribosomal subunit protein uS10 (103 aa).

It belongs to the universal ribosomal protein uS10 family. Part of the 30S ribosomal subunit.

In terms of biological role, involved in the binding of tRNA to the ribosomes. This chain is Small ribosomal subunit protein uS10, found in Neisseria gonorrhoeae (strain NCCP11945).